The sequence spans 214 residues: Large ribosomal subunit protein uL16 (214 aa).

A Citrulline modification is found at R32. A Glycyl lysine isopeptide (Lys-Gly) (interchain with G-Cter in SUMO2) cross-link involves residue K175. A Glycyl lysine isopeptide (Lys-Gly) (interchain with G-Cter in ubiquitin) cross-link involves residue K188.

Belongs to the universal ribosomal protein uL16 family. In terms of assembly, component of the large ribosomal subunit. Mature ribosomes consist of a small (40S) and a large (60S) subunit. The 40S subunit contains about 33 different proteins and 1 molecule of RNA (18S). The 60S subunit contains about 49 different proteins and 3 molecules of RNA (28S, 5.8S and 5S). Citrullinated by PADI4. In terms of processing, ufmylated by UFL1.

It localises to the cytoplasm. Component of the large ribosomal subunit. Plays a role in the formation of actively translating ribosomes. May play a role in the embryonic brain development. The chain is Large ribosomal subunit protein uL16 from Bos taurus (Bovine).